The following is a 120-amino-acid chain: NAD(P)H-quinone oxidoreductase subunit 3, chloroplastic (120 aa).

3 helical membrane passes run 9–29 (IFWAFLIISSLIPILAFFLSG), 62–82 (YYMFALVFVVFDVETVFLYPW), and 88–108 (VLGVSVFIEAFIFVLILIVGL).

The protein belongs to the complex I subunit 3 family. In terms of assembly, NDH is composed of at least 16 different subunits, 5 of which are encoded in the nucleus.

It localises to the plastid. Its subcellular location is the chloroplast thylakoid membrane. It carries out the reaction a plastoquinone + NADH + (n+1) H(+)(in) = a plastoquinol + NAD(+) + n H(+)(out). The catalysed reaction is a plastoquinone + NADPH + (n+1) H(+)(in) = a plastoquinol + NADP(+) + n H(+)(out). Its function is as follows. NDH shuttles electrons from NAD(P)H:plastoquinone, via FMN and iron-sulfur (Fe-S) centers, to quinones in the photosynthetic chain and possibly in a chloroplast respiratory chain. The immediate electron acceptor for the enzyme in this species is believed to be plastoquinone. Couples the redox reaction to proton translocation, and thus conserves the redox energy in a proton gradient. The polypeptide is NAD(P)H-quinone oxidoreductase subunit 3, chloroplastic (Trachelium caeruleum (Blue throatwort)).